Reading from the N-terminus, the 495-residue chain is Cytochrome P450 monooxygenase cnsC (495 aa).

Cys434 is a binding site for heme.

The protein belongs to the cytochrome P450 family. Requires heme as cofactor.

It participates in alkaloid biosynthesis. Functionally, cytochrome P450 monooxygenase; part of the gene cluster that mediates the biosynthesis of communesins, a prominent class of indole alkaloids with great potential as pharmaceuticals. Communesins are biosynthesized by the coupling of tryptamine and aurantioclavine, two building blocks derived from L-tryptophan. The L-tryptophan decarboxylase cnsB converts L-tryptophan to tryptamine, whereas the tryptophan dimethylallyltransferase cnsF converts L-tryptophan to 4-dimethylallyl tryptophan which is further transformed to aurantioclavine by the aurantioclavine synthase cnsA, probably aided by the catalase cnsD. The cytochrome P450 monooxygenase cnsC catalyzes the heterodimeric coupling between the two different indole moieties, tryptamine and aurantioclavine, to construct vicinal quaternary stereocenters and yield the heptacyclic communesin scaffold. The O-methyltransferase cnsE then methylates the communesin scaffold to produce communesin K, the simplest characterized communesin that contains the heptacyclic core. The dioxygenase cnsJ converts communesin K into communesin I. Acylation to introduce the hexadienyl group at position N16 of communesin I by the acyltransferase cnsK leads to the production of communesin B. The hexadienyl group is produced by the highly reducing polyketide synthase cnsI, before being hydrolytically removed from cnsI by the serine hydrolase cnsH, converted into hexadienyl-CoA by the CoA ligase cnsG, and then transferred to communesin I by cnsK. Surprisingly, cnsK may also be a promiscuous acyltransferase that can tolerate a range of acyl groups, including acetyl-, propionyl-, and butyryl-CoA, which lead to communesins A, G and H respectively. The roles of the alpha-ketoglutarate-dependent dioxygenases cnsM and cnsP have still to be determined. The polypeptide is Cytochrome P450 monooxygenase cnsC (Penicillium expansum (Blue mold rot fungus)).